The primary structure comprises 554 residues: Malate synthase 1 (554 aa).

Residue arginine 177 is the Proton acceptor of the active site. Aspartate 457 acts as the Proton donor in catalysis. The SKL peroxisome targeting motif motif lies at 552 to 554 (SKL).

This sequence belongs to the malate synthase family. As to quaternary structure, interacts with PEX9.

The protein localises to the peroxisome matrix. It carries out the reaction glyoxylate + acetyl-CoA + H2O = (S)-malate + CoA + H(+). The protein operates within carbohydrate metabolism; glyoxylate cycle; (S)-malate from isocitrate: step 2/2. Functionally, malate synthase which takes part in the glyoxylate cycle. MLS1 activity is essential for cells to grow on oleic acid as a sole carbon source. Two steps of the glyoxylate cycle take place in the cytosol, the splitting of isocitrate into succinate and glyoxylate, and the dehydrogenation of malate to oxaloacetate. However, the formation of malate from glyoxylate and acetyl-CoA undertaken MLS1, occurs in the peroxisomes when cells are grown on oleic acid. The source of acetyl-CoA being either peroxisomal when breaking down fatty acids, or cytosolic when extra-cellular two-carbon substrates are used, therefore, although not strictly essential, the peroxisomal localization of MLS1 appears to be advantageous for cells growing on oleic acid, in that acetyl-CoA production and utilization are thereby intimately compartmentalized together to increase efficiency. This is Malate synthase 1 from Saccharomyces cerevisiae (strain ATCC 204508 / S288c) (Baker's yeast).